The chain runs to 845 residues: Krueppel homolog 1 (845 aa).

The tract at residues 141-164 (QKQQQQQQHESITNAAPTAAPSAQ) is disordered. 8 consecutive C2H2-type zinc fingers follow at residues 194-216 (FKCD…TKSH), 271-293 (YQCN…YRTH), 299-321 (FECE…RRIH), 327-349 (YKCD…MRIH), 355-377 (HKCS…MRTH), 383-407 (YKCP…SRTH), 413-435 (YHCD…RVQH), and 441-463 (YKCT…IKGH). 2 disordered regions span residues 469-610 (DDEA…VQGQ) and 757-845 (GLRS…AKAS). 3 stretches are compositionally biased toward low complexity: residues 474 to 491 (AAAA…SAGS), 498 to 508 (SSNSESSNHSP), and 532 to 559 (ATLS…SSMA). Polar residues predominate over residues 582–591 (SGVSSAQPAH). Residues 759–775 (RSSTESPERSSSPESDS) are compositionally biased toward low complexity. The segment covering 796 to 809 (NKGDDGQVDSEKAS) has biased composition (basic and acidic residues). Over residues 810-823 (GDGTSAAGGAASVG) the composition is skewed to low complexity.

This sequence belongs to the krueppel C2H2-type zinc-finger protein family.

Plays a general role in the hierarchies of gene expression leading to metamorphosis. This is Krueppel homolog 1 (Kr-h1) from Drosophila melanogaster (Fruit fly).